The sequence spans 199 residues: Adenylyl-sulfate kinase (199 aa).

ATP is bound at residue 35–42 (GLSGSGKS). S109 (phosphoserine intermediate) is an active-site residue.

This sequence belongs to the APS kinase family.

The enzyme catalyses adenosine 5'-phosphosulfate + ATP = 3'-phosphoadenylyl sulfate + ADP + H(+). It participates in sulfur metabolism; hydrogen sulfide biosynthesis; sulfite from sulfate: step 2/3. In terms of biological role, catalyzes the synthesis of activated sulfate. This is Adenylyl-sulfate kinase from Clostridium kluyveri (strain ATCC 8527 / DSM 555 / NBRC 12016 / NCIMB 10680 / K1).